A 409-amino-acid polypeptide reads, in one-letter code: Dual-specificity RNA methyltransferase RlmN (409 aa).

Glu121 acts as the Proton acceptor in catalysis. Positions 127 to 376 (EEGRGTLCIS…IRTPRGRDIL (250 aa)) constitute a Radical SAM core domain. A disulfide bridge connects residues Cys134 and Cys379. [4Fe-4S] cluster is bound by residues Cys141, Cys145, and Cys148. S-adenosyl-L-methionine is bound by residues 205–206 (GE), Ser237, 259–261 (SLH), and Asn336. Cys379 (S-methylcysteine intermediate) is an active-site residue.

Belongs to the radical SAM superfamily. RlmN family. [4Fe-4S] cluster is required as a cofactor.

It is found in the cytoplasm. It carries out the reaction adenosine(2503) in 23S rRNA + 2 reduced [2Fe-2S]-[ferredoxin] + 2 S-adenosyl-L-methionine = 2-methyladenosine(2503) in 23S rRNA + 5'-deoxyadenosine + L-methionine + 2 oxidized [2Fe-2S]-[ferredoxin] + S-adenosyl-L-homocysteine. The catalysed reaction is adenosine(37) in tRNA + 2 reduced [2Fe-2S]-[ferredoxin] + 2 S-adenosyl-L-methionine = 2-methyladenosine(37) in tRNA + 5'-deoxyadenosine + L-methionine + 2 oxidized [2Fe-2S]-[ferredoxin] + S-adenosyl-L-homocysteine. Specifically methylates position 2 of adenine 2503 in 23S rRNA and position 2 of adenine 37 in tRNAs. m2A2503 modification seems to play a crucial role in the proofreading step occurring at the peptidyl transferase center and thus would serve to optimize ribosomal fidelity. The polypeptide is Dual-specificity RNA methyltransferase RlmN (Rhizobium etli (strain ATCC 51251 / DSM 11541 / JCM 21823 / NBRC 15573 / CFN 42)).